A 94-amino-acid chain; its full sequence is Acylphosphatase (94 aa).

The Acylphosphatase-like domain occupies 6–92 (RVHVWIRGRV…EGLPTFEIRP (87 aa)). Catalysis depends on residues R21 and N39.

The protein belongs to the acylphosphatase family.

It carries out the reaction an acyl phosphate + H2O = a carboxylate + phosphate + H(+). The chain is Acylphosphatase (acyP) from Synechococcus sp. (strain JA-2-3B'a(2-13)) (Cyanobacteria bacterium Yellowstone B-Prime).